The following is a 144-amino-acid chain: Interleukin-3 (144 aa).

An N-terminal signal peptide occupies residues 1–17 (MSSLSILHLLLLLLALH).

Belongs to the IL-3 family. Monomer.

The protein resides in the secreted. In terms of biological role, granulocyte/macrophage colony-stimulating factors are cytokines that act in hematopoiesis by controlling the production, differentiation, and function of 2 related white cell populations of the blood, the granulocytes and the monocytes-macrophages. Functionally, this CSF induces granulocytes, macrophages, mast cells, stem cells, erythroid cells, eosinophils and megakaryocytes. The sequence is that of Interleukin-3 (IL3) from Bos taurus (Bovine).